The sequence spans 1821 residues: PH-interacting protein (1821 aa).

The residue at position 136 (S136) is a Phosphoserine. WD repeat units follow at residues 181 to 222, 224 to 262, 265 to 310, 319 to 360, and 363 to 402; these read GHLS…ATLR, HAAE…PLAV, GHSA…INPR, RPGV…KISE, and FHTD…WKSI. K421 participates in a covalent cross-link: Glycyl lysine isopeptide (Lys-Gly) (interchain with G-Cter in SUMO2). 3 WD repeats span residues 422–461, 464–504, and 512–551; these read ITKM…LIHV, GHED…KVRS, and QGHG…KYDK. 6 positions are modified to phosphoserine: S641, S659, S674, S677, S683, and S692. Disordered regions lie at residues 653 to 695 and 782 to 927; these read EQDL…SGQI and DLGD…RLAV. Residues 665-681 show a composition bias toward polar residues; it reads SNASRVNRGSVSSTSEV. The segment covering 800-810 has biased composition (basic and acidic residues); it reads SALEETPRPLE. The segment covering 841–854 has biased composition (low complexity); that stretch reads SDGSSSDYSSDYSD. Phosphoserine is present on residues S879, S880, S881, and S911. Positions 912-924 are enriched in basic residues; it reads PKKKKPKERKQKR. Positions 924–1129 are mediates interaction with IRS1; that stretch reads RLAVGELTEN…MELIPNNAVF (206 aa). The region spanning 1156-1263 is the Bromo 1 domain; it reads WGANPRDEEC…DLLLHFIKDQ (108 aa). A phosphoserine mark is found at S1281, S1283, and S1296. The disordered stretch occupies residues 1282-1310; it reads DSEEEEKDADVPGTSTRKRKDHQPRRRLR. Residues 1297–1310 show a composition bias toward basic residues; it reads TRKRKDHQPRRRLR. S1315 is subject to Phosphoserine. Residues 1316-1421 form the Bromo 2 domain; it reads YDIQAWKKQC…AFFEEHISSV (106 aa). T1359 is modified (phosphothreonine). Position 1405 is a phosphoserine (S1405). Residues 1435 to 1446 are compositionally biased toward basic residues; that stretch reads NTISKKRKKRNR. The disordered stretch occupies residues 1435–1507; that stretch reads NTISKKRKKR…PESSSVVRTR (73 aa). A compositionally biased stretch (low complexity) spans 1447 to 1457; that stretch reads SSSLSSSAASS. A Glycyl lysine isopeptide (Lys-Gly) (interchain with G-Cter in SUMO1); alternate cross-link involves residue K1470. K1470 participates in a covalent cross-link: Glycyl lysine isopeptide (Lys-Gly) (interchain with G-Cter in SUMO2); alternate. A compositionally biased stretch (polar residues) spans 1471–1482; the sequence is SEVSTSPFSIPT. The residue at position 1479 (S1479) is a Phosphoserine. K1497 carries the post-translational modification N6-acetyllysine. S1525 is modified (phosphoserine). K1533 carries the N6-acetyllysine modification. Polar residues predominate over residues 1556–1576; the sequence is STLSSPDPLTFSHATKNNSAK. Disordered stretches follow at residues 1556–1596, 1623–1676, and 1740–1785; these read STLS…VFSK, QVNG…NSEQ, and RSNR…DSEE. S1560 carries the phosphoserine modification. K1644 participates in a covalent cross-link: Glycyl lysine isopeptide (Lys-Gly) (interchain with G-Cter in SUMO2). Residue S1651 is modified to Phosphoserine. Residue K1670 forms a Glycyl lysine isopeptide (Lys-Gly) (interchain with G-Cter in SUMO2) linkage. A phosphoserine mark is found at S1762 and S1783.

In terms of assembly, interacts (via bromo domain) with acetylated lysine residues on histone H1.4, histone H3 and H4 (in vitro). Interacts with IRS1 and IRS2. Widely expressed with most abundant expression detected in pancreatic islets, brain and skeletal muscle. Predominantly expressed in developing and regenerating neurons. Expressed in adult brain (granular layer of the olfactorium bulb, hippocampus, dentate gyrus and cerebellum internal granular layer). Expressed in the CA3 region of adult hippocampus, adult and fetal retina, perinatal dorsal root ganglion and embryonal olfactory epithelia (at protein level).

It is found in the nucleus. Functionally, probable regulator of the insulin and insulin-like growth factor signaling pathways. Stimulates cell proliferation through regulation of cyclin transcription and has an anti-apoptotic activity through AKT1 phosphorylation and activation. Plays a role in the regulation of cell morphology and cytoskeletal organization. The chain is PH-interacting protein (Phip) from Mus musculus (Mouse).